The chain runs to 607 residues: Elongation factor 4 (607 aa).

Residues 11–193 enclose the tr-type G domain; sequence SKIRNFSIIA…QIVEKVPAPT (183 aa). Residues 23-28 and 140-143 each bind GTP; these read DHGKST and NKID.

It belongs to the TRAFAC class translation factor GTPase superfamily. Classic translation factor GTPase family. LepA subfamily.

Its subcellular location is the cell membrane. The enzyme catalyses GTP + H2O = GDP + phosphate + H(+). In terms of biological role, required for accurate and efficient protein synthesis under certain stress conditions. May act as a fidelity factor of the translation reaction, by catalyzing a one-codon backward translocation of tRNAs on improperly translocated ribosomes. Back-translocation proceeds from a post-translocation (POST) complex to a pre-translocation (PRE) complex, thus giving elongation factor G a second chance to translocate the tRNAs correctly. Binds to ribosomes in a GTP-dependent manner. This is Elongation factor 4 from Bacillus mycoides (strain KBAB4) (Bacillus weihenstephanensis).